Consider the following 559-residue polypeptide: N-acetylglucosamine-6-sulfatase (559 aa).

The disordered stretch occupies residues 1–26 (MRFLSLAPDRPRRGGPRHLPSGSPAP). The signal sequence occupies residues 1 to 47 (MRFLSLAPDRPRRGGPRHLPSGSPAPPPPPPLLLLLLLGGCLGVSGA). Positions 62, 63, and 98 each coordinate Ca(2+). The active-site Nucleophile is the Cys-98. Cys-98 carries the post-translational modification 3-oxoalanine (Cys). N-linked (GlcNAc...) asparagine glycosylation is found at Asn-118, Asn-124, Asn-190, Asn-205, Asn-217, Asn-286, and Asn-324. Residues Asp-333 and Asn-334 each coordinate Ca(2+). Asn-369, Asn-394, Asn-412, Asn-429, Asn-456, and Asn-487 each carry an N-linked (GlcNAc...) asparagine glycan. Ser-548 carries the post-translational modification Phosphoserine.

This sequence belongs to the sulfatase family. Ca(2+) is required as a cofactor. In terms of processing, processed by internal peptidase. Post-translationally, the conversion to 3-oxoalanine (also known as C-formylglycine, FGly), of a serine or cysteine residue in prokaryotes and of a cysteine residue in eukaryotes, is critical for catalytic activity.

The protein localises to the lysosome. It carries out the reaction Hydrolysis of the 6-sulfate groups of the N-acetyl-D-glucosamine 6-sulfate units of heparan sulfate and keratan sulfate.. Its function is as follows. Hydrolyzes 6-sulfate groups in N-acetyl-d-glucosaminide units of heparin sulfate and keratan sulfate. This chain is N-acetylglucosamine-6-sulfatase (GNS), found in Capra hircus (Goat).